A 346-amino-acid polypeptide reads, in one-letter code: Mannonate dehydratase (346 aa).

Belongs to the mannonate dehydratase family. Requires Fe(2+) as cofactor. Mn(2+) serves as cofactor.

It catalyses the reaction D-mannonate = 2-dehydro-3-deoxy-D-gluconate + H2O. It participates in carbohydrate metabolism; pentose and glucuronate interconversion. Functionally, catalyzes the dehydration of D-mannonate. This is Mannonate dehydratase from Cupriavidus taiwanensis (strain DSM 17343 / BCRC 17206 / CCUG 44338 / CIP 107171 / LMG 19424 / R1) (Ralstonia taiwanensis (strain LMG 19424)).